Here is a 341-residue protein sequence, read N- to C-terminus: S-adenosylmethionine:tRNA ribosyltransferase-isomerase (341 aa).

The protein belongs to the QueA family. In terms of assembly, monomer.

Its subcellular location is the cytoplasm. The catalysed reaction is 7-aminomethyl-7-carbaguanosine(34) in tRNA + S-adenosyl-L-methionine = epoxyqueuosine(34) in tRNA + adenine + L-methionine + 2 H(+). It participates in tRNA modification; tRNA-queuosine biosynthesis. Its function is as follows. Transfers and isomerizes the ribose moiety from AdoMet to the 7-aminomethyl group of 7-deazaguanine (preQ1-tRNA) to give epoxyqueuosine (oQ-tRNA). The chain is S-adenosylmethionine:tRNA ribosyltransferase-isomerase from Desulforamulus reducens (strain ATCC BAA-1160 / DSM 100696 / MI-1) (Desulfotomaculum reducens).